We begin with the raw amino-acid sequence, 238 residues long: Protein odd-skipped-related 2 (238 aa).

The interval 105 to 126 (EDPPVTGQSRLSPERRPARGRL) is disordered. 3 consecutive C2H2-type zinc fingers follow at residues 134-156 (FICRFCGRHFTKSYNLLIHERTH), 162-184 (YTCDICHKAFRRQDHLRDHRYIH), and 190-212 (FKCQECGKGFCQSRTLAVHKTLH).

The protein belongs to the Odd C2H2-type zinc-finger protein family. At the 8-somite stage, expressed in the pronephros, with weak generalized expression elsewhere. At 24 hpf, expressed in the kidney tubules and the anterior duct, and also in the gut. At 60 hpf, expressed in the tubules and the pectoral fin buds.

Its subcellular location is the nucleus. In terms of biological role, transcriptional repressor. Required for pronephric kidney development. The polypeptide is Protein odd-skipped-related 2 (Danio rerio (Zebrafish)).